A 510-amino-acid polypeptide reads, in one-letter code: Monocarboxylate transporter 14 (510 aa).

At methionine 1–asparagine 27 the chain is on the cytoplasmic side. Helical transmembrane passes span isoleucine 28–methionine 48, tryptophan 74–isoleucine 94, alanine 103–valine 123, phenylalanine 127–valine 147, leucine 159–leucine 179, and alanine 191–methionine 209. Residues proline 214 to asparagine 255 are disordered. Polar residues predominate over residues serine 233–glycine 244. A run of 6 helical transmembrane segments spans residues methionine 315–isoleucine 335, phenylalanine 353–isoleucine 373, isoleucine 379–leucine 399, leucine 408–valine 428, glycine 443–isoleucine 463, and phenylalanine 474–isoleucine 494. The Cytoplasmic segment spans residues arginine 495–valine 510.

The protein belongs to the major facilitator superfamily. Monocarboxylate porter (TC 2.A.1.13) family.

It is found in the cell membrane. In terms of biological role, proton-linked monocarboxylate transporter. May catalyze the transport of monocarboxylates across the plasma membrane. This chain is Monocarboxylate transporter 14 (SLC16A14), found in Homo sapiens (Human).